Here is a 499-residue protein sequence, read N- to C-terminus: Lipopolysaccharide core galacturonosyltransferase RgtA (499 aa).

The next 10 helical transmembrane spans lie at 11–31, 74–94, 103–123, 125–145, 165–185, 199–219, 248–268, 291–311, 316–336, and 351–371; these read TAGL…IVLP, IGAL…FYGL, EALA…SYMA, QDLT…YGFF, IGLI…IAIL, MLAA…WLQG, LLAF…IFAA, MMLA…STTV, LDPF…AAGL, and VLMA…GLIG.

It belongs to the glycosyltransferase 83 family.

The protein localises to the cell inner membrane. It functions in the pathway bacterial outer membrane biogenesis; LPS core biosynthesis. Its function is as follows. Involved in the modification of the lipopolysaccharide (LPS) inner core. Catalyzes the transfer of a galacturonic acid (GalA) residue to the 4-position of the outer Kdo (3-deoxy-D-manno-octulosonic acid) residue of the LPS inner core, using dodecaprenyl phosphate-GalA as the donor substrate. GalA addition by RgtA is required for RgtB activity. This Rhizobium johnstonii (strain DSM 114642 / LMG 32736 / 3841) (Rhizobium leguminosarum bv. viciae) protein is Lipopolysaccharide core galacturonosyltransferase RgtA.